The sequence spans 705 residues: Elongation factor G (705 aa).

The tr-type G domain maps to 8 to 290 (ERYRNFGIMA…GVVHLLPSPA (283 aa)). GTP contacts are provided by residues 17–24 (AHIDAGKT), 88–92 (DTPGH), and 142–145 (NKMD). The tract at residues 290-309 (ADRPPVQGIDEDEKEDTRAA) is disordered.

The protein belongs to the TRAFAC class translation factor GTPase superfamily. Classic translation factor GTPase family. EF-G/EF-2 subfamily.

It localises to the cytoplasm. Functionally, catalyzes the GTP-dependent ribosomal translocation step during translation elongation. During this step, the ribosome changes from the pre-translocational (PRE) to the post-translocational (POST) state as the newly formed A-site-bound peptidyl-tRNA and P-site-bound deacylated tRNA move to the P and E sites, respectively. Catalyzes the coordinated movement of the two tRNA molecules, the mRNA and conformational changes in the ribosome. The sequence is that of Elongation factor G from Xanthomonas oryzae pv. oryzae (strain MAFF 311018).